The chain runs to 687 residues: DNA-directed RNA polymerase subunit beta' (687 aa).

Zn(2+) contacts are provided by Cys-69, Cys-71, Cys-87, and Cys-90. Mg(2+) is bound by residues Asp-493, Asp-495, and Asp-497.

This sequence belongs to the RNA polymerase beta' chain family. RpoC1 subfamily. In plastids the minimal PEP RNA polymerase catalytic core is composed of four subunits: alpha, beta, beta', and beta''. When a (nuclear-encoded) sigma factor is associated with the core the holoenzyme is formed, which can initiate transcription. The cofactor is Mg(2+). Zn(2+) serves as cofactor.

The protein localises to the plastid. The protein resides in the chloroplast. It carries out the reaction RNA(n) + a ribonucleoside 5'-triphosphate = RNA(n+1) + diphosphate. Its function is as follows. DNA-dependent RNA polymerase catalyzes the transcription of DNA into RNA using the four ribonucleoside triphosphates as substrates. The polypeptide is DNA-directed RNA polymerase subunit beta' (Angiopteris evecta (Mule's foot fern)).